We begin with the raw amino-acid sequence, 208 residues long: DNA-binding protein HupB (208 aa).

A bacterial histone-like domain region spans residues 1–90; the sequence is MNKAELIDVL…PGAQFKAVIS (90 aa). Lysine 3 is modified (N6-acetyllysine). Lysine 3 bears the N6-acetyllysine; alternate; partial mark. Lysine 3 is subject to N6-methyllysine; alternate; partial. Lysine 72 carries the post-translational modification N6-acetyllysine; partial. The residue at position 86 (lysine 86) is an N6-methyllysine; partial. Positions 92–208 are C-terminus, required for nucleoid localization; sequence AQKLPADGPA…KKAPAKKGRR (117 aa). N6-acetyllysine; alternate; partial occurs at positions 94 and 103. N6-methyllysine; alternate; partial is present on residues lysine 94 and lysine 103. The disordered stretch occupies residues 96-208; sequence PADGPAVKRG…KKAPAKKGRR (113 aa). The interval 101 to 205 is degenerate repeats region; it reads AVKRGVTAGP…AAAKKAPAKK (105 aa). The segment covering 113–208 has biased composition (basic residues); that stretch reads KAAKKAPAKK…KKAPAKKGRR (96 aa). 4 positions are modified to N6-acetyllysine: lysine 116, lysine 136, lysine 149, and lysine 168.

This sequence belongs to the bacterial histone-like protein family. Long actinobacterial subfamily. In terms of assembly, may form oligomers. Interacts with RNase E (rne). In terms of processing, in addition to the identifed modifications, is also methylated on one of Arg-53; Arg-54 or Arg-55.

It is found in the cytoplasm. It localises to the nucleoid. Its subcellular location is the secreted. The protein resides in the cell wall. The enzyme catalyses 4 Fe(2+) + O2 + 4 H(+) = 4 Fe(3+) + 2 H2O. Trans-stilbene derivative 4,4'-[(E)-ethene-1,2 diylbis({5[(phenylcarbonyl)amino]benzene-2,1-diyl}sulfonylimino)] dibenzoic acid (SD1) inhibits DNA binding at 50 uM. SD1 does not inhibit growth in a range of 3-1600 uM. A nucleoid-associated protein (NAP) that plays a crucial role in local chromosome architecture. Helps organize newly replicated oriC proximal regions and contributes to the timing of replication initiation and coordinating replication with chromosome segregation. There are between 30,000-60,000 molecules in a log phase cell; the protein-DNA complex is dynamic during the cell cycle, with more complexes near the cell ends. Binds irregularly along the chromosome with higher binding near the origin of replication (oriC) and lowest binding near the chromosome terminus (ter). Binds DNA non-sequence specifically via both its N- and C-terminal domains with high affinity, has no preference for linear or supercoiled DNA. Binds four-way junction DNA. Represses T7 RNA polymerase in vitro. The C-terminal domain enhances DNA end-joining in vitro in the presence of T4 DNA ligase. RNase E and HupB jointly contribute to cellular adaptation to changing growth conditions and survival during antibiotic treatment. Its function is as follows. Has ferroxidase activity, converts Fe(2+) into Fe(3+). Binds Fe(3+) but not Fe(2+); prevents the generation of hydroxyl radicals by the Fenton reaction and thus protects DNA from damage. May function in iron storage. Functionally, plays a role in epigenetic resistance to antibiotics. Growth on levels of isoniazid (INH) near the minimal inhibitory concentration (MIC) kills most bacteria. The surviving cells grow as either large or small colony variants (SCV), evidence suggest SCVs are associated with persistent infections. Mutating this protein leads to specific loss of SCVs. In terms of biological role, may play a role in cell wall assembly. In Mycolicibacterium smegmatis (strain ATCC 700084 / mc(2)155) (Mycobacterium smegmatis), this protein is DNA-binding protein HupB.